We begin with the raw amino-acid sequence, 466 residues long: Ribulose bisphosphate carboxylase large chain (466 aa).

Lys-5 is subject to N6,N6,N6-trimethyllysine. Positions 114 and 164 each coordinate substrate. Lys-166 (proton acceptor) is an active-site residue. Residue Lys-168 participates in substrate binding. Mg(2+) is bound by residues Lys-192, Asp-194, and Glu-195. The residue at position 192 (Lys-192) is an N6-carboxylysine. The Proton acceptor role is filled by His-285. 3 residues coordinate substrate: Arg-286, His-318, and Ser-370.

It belongs to the RuBisCO large chain family. Type I subfamily. As to quaternary structure, heterohexadecamer of 8 large chains and 8 small chains; disulfide-linked. The disulfide link is formed within the large subunit homodimers. It depends on Mg(2+) as a cofactor. The disulfide bond which can form in the large chain dimeric partners within the hexadecamer appears to be associated with oxidative stress and protein turnover.

It localises to the plastid. The protein resides in the chloroplast. The enzyme catalyses 2 (2R)-3-phosphoglycerate + 2 H(+) = D-ribulose 1,5-bisphosphate + CO2 + H2O. The catalysed reaction is D-ribulose 1,5-bisphosphate + O2 = 2-phosphoglycolate + (2R)-3-phosphoglycerate + 2 H(+). In terms of biological role, ruBisCO catalyzes two reactions: the carboxylation of D-ribulose 1,5-bisphosphate, the primary event in carbon dioxide fixation, as well as the oxidative fragmentation of the pentose substrate in the photorespiration process. Both reactions occur simultaneously and in competition at the same active site. This is Ribulose bisphosphate carboxylase large chain from Cucurbita pepo (Vegetable marrow).